We begin with the raw amino-acid sequence, 759 residues long: NADP-dependent malic enzyme (759 aa).

Residues 1–428 form a malic enzyme region; it reads MDDQLKQSAL…KLTEFVYKTN (428 aa). Residue Y39 is the Proton donor of the active site. K56 carries the post-translational modification N6-acetyllysine. The active-site Proton acceptor is K94. A divalent metal cation is bound by residues E136, D137, and D162. NADP(+)-binding positions include 195–198, N288, and N320; that span reads AGAA. Positions 429-759 are phosphate acetyltransferase; required for oligomerization, inhibition by acetyl-CoA and activation by glutamate, aspartate, and glucose-6-phosphate; it reads LFMKPIFSQA…AVVEAQTQPL (331 aa).

The protein in the N-terminal section; belongs to the malic enzymes family. This sequence in the C-terminal section; belongs to the phosphate acetyltransferase and butyryltransferase family. Homooligomer, possibly an octamer. Requires Mg(2+) as cofactor. Mn(2+) serves as cofactor.

The catalysed reaction is (S)-malate + NADP(+) = pyruvate + CO2 + NADPH. The enzyme catalyses oxaloacetate + H(+) = pyruvate + CO2. Inhibited by 4 mM Mg(2+) and acetyl-CoA, competitively inhibited by fumarate and oxaloacetate. Activated by glutamate and aspartate, glucose-6-phosphate, acetyl-phosphate and 2 mM KCl. Catalyzes the decarboxylation of malate to pyruvate. In vitro, shows malolactic enzyme activity in the presence of NADPH. However, it is unlikely that this activity is of relevance in E.coli, which produces little NADPH. This chain is NADP-dependent malic enzyme (maeB), found in Escherichia coli (strain K12).